Consider the following 1378-residue polypeptide: Disease resistance protein RRS1 (1378 aa).

In terms of domain architecture, TIR spans 5-146; it reads EKDEEFVCIS…EIVRDVYETH (142 aa). Residues 170–421 enclose the NB-ARC domain; it reads IGIRCVGIWG…LLEGCGFFPH (252 aa). 179 to 186 contacts ATP; the sequence is GMPGIGKT. LRR repeat units follow at residues 498-522, 535-553, 554-575, 577-598, 621-646, 665-688, 742-766, 768-793, and 831-854; these read SEEIEGLFLDTSNLRFDLQPSAFKN, NPEVHPVINFPTGSLHSLP, NELRLLHWENYPLKSLPQNFDP, HLVEINMPYSQLQKLWGGTKNL, AENLEVIDLQGCTRLQNFPAAGRLLR, PPNIEKLHLQGTGILALPVSTVKP, LPNMANLDLNVLDLSGCSSLNSIQG, PRFLKQLYLGGTAIREVPQLPQSLEI, and PRNLKELYFAGTTLREVPQLPLSL. The Nuclear localization signal motif lies at 988–1005; the sequence is RNFHCWAPGKVVPKVRKD. The segment at residues 1204 to 1272 is a DNA-binding region (WRKY); sequence IPAIDEGDLW…YLSEHNHPRP (69 aa). The tract at residues 1300 to 1321 is disordered; the sequence is RVFQNKDEPNQPHLPSSSTPPR.

Interacts with PopP2, a R.solanacearum type III effector.

Its subcellular location is the nucleus. It is found in the cytoplasm. Functionally, transcription factor. Interacts specifically with the W box (5'-(T)TGAC[CT]-3'), a frequently occurring elicitor-responsive cis-acting element. Also acts as a disease resistance protein involved in resistance to fungal and bacterial pathogens, including R.solanacearum, P.syringae pv. tomato and C.higginsianum. RRS1 mediated resistance depends on salicylic acid and NDR1 (AC O48915). This is Disease resistance protein RRS1 from Arabidopsis thaliana (Mouse-ear cress).